Here is a 398-residue protein sequence, read N- to C-terminus: Succinate--CoA ligase [ADP-forming] subunit beta (398 aa).

Residues 9-250 enclose the ATP-grasp domain; that stretch reads KQLFARYGVP…VDEEDPVELQ (242 aa). Residues lysine 50, 57–59, glutamate 104, leucine 107, and glutamate 112 contribute to the ATP site; that span reads GRG. Positions 205 and 219 each coordinate Mg(2+). Substrate-binding positions include asparagine 270 and 327–329; that span reads GIM.

This sequence belongs to the succinate/malate CoA ligase beta subunit family. As to quaternary structure, heterotetramer of two alpha and two beta subunits. The cofactor is Mg(2+).

The enzyme catalyses succinate + ATP + CoA = succinyl-CoA + ADP + phosphate. The catalysed reaction is GTP + succinate + CoA = succinyl-CoA + GDP + phosphate. The protein operates within carbohydrate metabolism; tricarboxylic acid cycle; succinate from succinyl-CoA (ligase route): step 1/1. Its function is as follows. Succinyl-CoA synthetase functions in the citric acid cycle (TCA), coupling the hydrolysis of succinyl-CoA to the synthesis of either ATP or GTP and thus represents the only step of substrate-level phosphorylation in the TCA. The beta subunit provides nucleotide specificity of the enzyme and binds the substrate succinate, while the binding sites for coenzyme A and phosphate are found in the alpha subunit. In Sorangium cellulosum (strain So ce56) (Polyangium cellulosum (strain So ce56)), this protein is Succinate--CoA ligase [ADP-forming] subunit beta.